We begin with the raw amino-acid sequence, 29 residues long: uncharacterized protein (29 aa).

Positions 1–29 (MFKMKFGDTLPRSDFGTGGNKQAPGLELG) are disordered.

This is an uncharacterized protein from Saccharomyces cerevisiae (strain ATCC 204508 / S288c) (Baker's yeast).